Here is a 401-residue protein sequence, read N- to C-terminus: Nicotinate phosphoribosyltransferase (401 aa).

Phosphohistidine; by autocatalysis is present on His-221.

Belongs to the NAPRTase family. Post-translationally, transiently phosphorylated on a His residue during the reaction cycle. Phosphorylation strongly increases the affinity for substrates and increases the rate of nicotinate D-ribonucleotide production. Dephosphorylation regenerates the low-affinity form of the enzyme, leading to product release.

It catalyses the reaction nicotinate + 5-phospho-alpha-D-ribose 1-diphosphate + ATP + H2O = nicotinate beta-D-ribonucleotide + ADP + phosphate + diphosphate. The protein operates within cofactor biosynthesis; NAD(+) biosynthesis; nicotinate D-ribonucleotide from nicotinate: step 1/1. Its function is as follows. Catalyzes the synthesis of beta-nicotinate D-ribonucleotide from nicotinate and 5-phospho-D-ribose 1-phosphate at the expense of ATP. In Erwinia tasmaniensis (strain DSM 17950 / CFBP 7177 / CIP 109463 / NCPPB 4357 / Et1/99), this protein is Nicotinate phosphoribosyltransferase.